Consider the following 300-residue polypeptide: Acetylglutamate kinase (300 aa).

Residues 69-70, Arg91, and Asn197 contribute to the substrate site; that span reads GG.

The protein belongs to the acetylglutamate kinase family. ArgB subfamily.

Its subcellular location is the cytoplasm. It catalyses the reaction N-acetyl-L-glutamate + ATP = N-acetyl-L-glutamyl 5-phosphate + ADP. It participates in amino-acid biosynthesis; L-arginine biosynthesis; N(2)-acetyl-L-ornithine from L-glutamate: step 2/4. Functionally, catalyzes the ATP-dependent phosphorylation of N-acetyl-L-glutamate. This is Acetylglutamate kinase from Kineococcus radiotolerans (strain ATCC BAA-149 / DSM 14245 / SRS30216).